The sequence spans 195 residues: Protein GrpE (195 aa).

The segment at methionine 1–glutamate 30 is disordered. Positions glutamate 10 to asparagine 20 are enriched in acidic residues.

This sequence belongs to the GrpE family. As to quaternary structure, homodimer.

Its subcellular location is the cytoplasm. In terms of biological role, participates actively in the response to hyperosmotic and heat shock by preventing the aggregation of stress-denatured proteins, in association with DnaK and GrpE. It is the nucleotide exchange factor for DnaK and may function as a thermosensor. Unfolded proteins bind initially to DnaJ; upon interaction with the DnaJ-bound protein, DnaK hydrolyzes its bound ATP, resulting in the formation of a stable complex. GrpE releases ADP from DnaK; ATP binding to DnaK triggers the release of the substrate protein, thus completing the reaction cycle. Several rounds of ATP-dependent interactions between DnaJ, DnaK and GrpE are required for fully efficient folding. This is Protein GrpE from Histophilus somni (strain 2336) (Haemophilus somnus).